The following is a 415-amino-acid chain: MGTTTSHPAQKKQTTKKCRAPIMSDVREKPSNAQGCEPQEMDAVSKKVTELSLNKCSDSQDAGQPSREGSITKKKSTLLLRDEDEPTMPKLSVMETAVDTDSGSSSTSDDEEGDIIAQTTEPKQDASPDDDRSGHSSPREEGQQQIRAKEASGGPSEIKSSLMVPVEIRWQQGGSKVYVTGSFTKWRKMIGLIPDSDNNGSFHVKLRLLPGTHRFRFIVDNELRVSDFLPTATDQMGNFVNYIEVRQPEKNPTNEKIRSKEADSMRPPTSDRSSIALQIGKDPDDFGDGYTRFHEDLSPRPPLEYTTDIPAVFTDPSVMERYYYTLDRQQSNTDTSWLTPPQLPPQLENVILNKYYATQDQFNENNSGALPIPNHVVLNHLVTSSIKHNTLCVASIVRYKQKYVTQILYTPIESS.

Disordered regions lie at residues 1–43 (MGTT…EMDA), 55–158 (KCSD…PSEI), and 249–276 (EKNP…SSIA). A lipid anchor (N-myristoyl glycine) is attached at glycine 2. Positions 9–19 (AQKKQTTKKCR) are enriched in basic residues. Residues 55-69 (KCSDSQDAGQPSREG) are compositionally biased toward polar residues. Serine 66 bears the Phosphoserine mark. Basic and acidic residues-rich tracts occupy residues 122–150 (PKQD…RAKE) and 249–264 (EKNP…EADS). Positions 154 to 335 (GPSEIKSSLM…LDRQQSNTDT (182 aa)) are kinase-interacting sequence (KIS); required for interaction with SNF1. Serine 298 is modified (phosphoserine). Residues 336 to 415 (SWLTPPQLPP…QILYTPIESS (80 aa)) form an association with SNF1 kinase complex (ASC) domain; required for interaction with SNF4 region.

The protein belongs to the 5'-AMP-activated protein kinase beta subunit family. Component of the SNF1 kinase complex, a heterotrimeric complex composed of the catalytic alpha subunit SNF1, one of the three related beta subunits SIP1, SIP2 or GAL83, and the regulatory gamma subunit SNF4. The beta subunit serves as a bridge between the catalytic and the regulatory subunit. Interacts (via KIS domain) with SNF1. Interacts (via ASC domain) with SNF4. In terms of processing, phosphorylated by SNF1 in vitro.

The protein localises to the cytoplasm. It is found in the cell membrane. Its function is as follows. Beta subunit of the SNF1 kinase complex, which is required for transcriptional, metabolic, and developmental adaptations in response to glucose limitation. Has a structural role, mediating heterotrimer formation, and a regulatory role, defining carbon source-regulated subcellular location and substrate specificity of the SNF1 kinase complex. Involved in the regulation of aging. Acts as a negative regulator of nuclear SNF1 activity in young cells by sequestering its activating gamma subunit at the plasma membrane. The chain is SNF1 protein kinase subunit beta-2 (SIP2) from Saccharomyces cerevisiae (strain ATCC 204508 / S288c) (Baker's yeast).